A 234-amino-acid polypeptide reads, in one-letter code: 2-C-methyl-D-erythritol 4-phosphate cytidylyltransferase (234 aa).

Belongs to the IspD/TarI cytidylyltransferase family. IspD subfamily.

The enzyme catalyses 2-C-methyl-D-erythritol 4-phosphate + CTP + H(+) = 4-CDP-2-C-methyl-D-erythritol + diphosphate. It functions in the pathway isoprenoid biosynthesis; isopentenyl diphosphate biosynthesis via DXP pathway; isopentenyl diphosphate from 1-deoxy-D-xylulose 5-phosphate: step 2/6. In terms of biological role, catalyzes the formation of 4-diphosphocytidyl-2-C-methyl-D-erythritol from CTP and 2-C-methyl-D-erythritol 4-phosphate (MEP). This is 2-C-methyl-D-erythritol 4-phosphate cytidylyltransferase from Pseudomonas aeruginosa (strain UCBPP-PA14).